A 209-amino-acid polypeptide reads, in one-letter code: Large ribosomal subunit protein uL3 (209 aa).

A disordered region spans residues 128-156; sequence FAGGSRTHGQSDRLRAPGSVGGSSDPSRT.

Belongs to the universal ribosomal protein uL3 family. In terms of assembly, part of the 50S ribosomal subunit. Forms a cluster with proteins L14 and L19.

Functionally, one of the primary rRNA binding proteins, it binds directly near the 3'-end of the 23S rRNA, where it nucleates assembly of the 50S subunit. This chain is Large ribosomal subunit protein uL3, found in Prosthecochloris aestuarii (strain DSM 271 / SK 413).